Here is a 313-residue protein sequence, read N- to C-terminus: Protoheme IX farnesyltransferase (313 aa).

Transmembrane regions (helical) follow at residues 29–49 (VISL…RGWP), 57–77 (LWLL…AGVF), 101–123 (LISS…VMLW), 124–144 (VWGT…YVVI), 157–177 (IVIG…AVTG), 185–205 (YLFA…ALMI), 225–245 (MTVA…LMPV), 247–267 (FGAV…WLLW), and 287–307 (AVPL…AGAI).

The protein belongs to the UbiA prenyltransferase family. Protoheme IX farnesyltransferase subfamily.

It is found in the cell membrane. It catalyses the reaction heme b + (2E,6E)-farnesyl diphosphate + H2O = Fe(II)-heme o + diphosphate. It participates in porphyrin-containing compound metabolism; heme O biosynthesis; heme O from protoheme: step 1/1. Converts heme B (protoheme IX) to heme O by substitution of the vinyl group on carbon 2 of heme B porphyrin ring with a hydroxyethyl farnesyl side group. This Deinococcus radiodurans (strain ATCC 13939 / DSM 20539 / JCM 16871 / CCUG 27074 / LMG 4051 / NBRC 15346 / NCIMB 9279 / VKM B-1422 / R1) protein is Protoheme IX farnesyltransferase.